Consider the following 505-residue polypeptide: RNA-splicing ligase RtcB homolog (505 aa).

Positions 119, 122, 227, and 259 each coordinate Mn(2+). 226–230 (NHYAE) is a binding site for GMP. At serine 300 the chain carries Phosphoserine. Position 353 (histidine 353) interacts with Mn(2+). GMP is bound by residues 353 to 354 (HN), 402 to 405 (GGTM), serine 409, and 428 to 431 (HGAG). The active-site GMP-histidine intermediate is histidine 428. Lysine 496 participates in a covalent cross-link: Glycyl lysine isopeptide (Lys-Gly) (interchain with G-Cter in SUMO2). A GMP-binding site is contributed by lysine 504.

It belongs to the RtcB family. Catalytic component of the tRNA-splicing ligase complex. Requires Mn(2+) as cofactor.

The protein resides in the nucleus. Its subcellular location is the cytoplasm. The catalysed reaction is a 3'-end 3'-phospho-ribonucleotide-RNA + a 5'-end dephospho-ribonucleoside-RNA + GTP = a ribonucleotidyl-ribonucleotide-RNA + GMP + diphosphate. It catalyses the reaction a 3'-end 2',3'-cyclophospho-ribonucleotide-RNA + a 5'-end dephospho-ribonucleoside-RNA + GTP + H2O = a ribonucleotidyl-ribonucleotide-RNA + GMP + diphosphate + H(+). Its function is as follows. Catalytic subunit of the tRNA-splicing ligase complex that acts by directly joining spliced tRNA halves to mature-sized tRNAs by incorporating the precursor-derived splice junction phosphate into the mature tRNA as a canonical 3',5'-phosphodiester. May act as an RNA ligase with broad substrate specificity, and may function toward other RNAs. The polypeptide is RNA-splicing ligase RtcB homolog (Sus scrofa (Pig)).